The primary structure comprises 451 residues: Phosphoglucosamine mutase (451 aa).

Serine 101 acts as the Phosphoserine intermediate in catalysis. Positions 101, 241, 243, and 245 each coordinate Mg(2+). Serine 101 is modified (phosphoserine).

It belongs to the phosphohexose mutase family. It depends on Mg(2+) as a cofactor. In terms of processing, activated by phosphorylation.

It carries out the reaction alpha-D-glucosamine 1-phosphate = D-glucosamine 6-phosphate. Functionally, catalyzes the conversion of glucosamine-6-phosphate to glucosamine-1-phosphate. The sequence is that of Phosphoglucosamine mutase from Exiguobacterium sibiricum (strain DSM 17290 / CCUG 55495 / CIP 109462 / JCM 13490 / 255-15).